The primary structure comprises 1954 residues: Protein abnormal spindle (1954 aa).

Residues 134 to 155 (VKNPRKFPTVGKTLQLKSPTGA) are disordered. 2 positions are modified to phosphoserine: Ser151 and Ser360. Thr364 is subject to Phosphothreonine. Ser388, Ser390, Ser395, Ser398, Ser491, Ser495, Ser497, Ser501, Ser504, and Ser514 each carry phosphoserine. A disordered region spans residues 476–548 (KSVKGSPVKN…SSSAHAWPHA (73 aa)). The segment covering 498–507 (DAPSNESLYR) has biased composition (polar residues). Residues 528–548 (RSAAPANASARSSSAHAWPHA) show a composition bias toward low complexity. One can recognise a Calponin-homology (CH) domain in the interval 836 to 968 (KETKDILLRF…LLWQLIYKFR (133 aa)). IQ domains are found at residues 1004–1033 (RHRAATVIQAVFRGHQMRKYVKLFKTERTQ), 1386–1415 (TQAAVSCLQMHWRNHLLRKRERNSFLQLRQ), and 1467–1496 (QREAIIKVQRRYRGNLEMRKQIEVYQKQRQ). Positions 1614 to 1641 (RANRSMKQARQEFVQLRTIAVHLQQKFR) form a coiled coil. 2 consecutive IQ domains span residues 1656-1687 (LRCSMPGFQARARGFMARKRFQALMTPEMMDL) and 1690-1721 (QKRAAKVIQRYWRGYLIRRRQKHQGLLDIRKR).

The protein resides in the cytoplasm. It localises to the nucleus. The protein localises to the cytoskeleton. Its subcellular location is the spindle. It is found in the microtubule organizing center. The protein resides in the perinuclear region. In terms of biological role, required to maintain the structure of the centrosomal microtubule organizing center (MTOC) during mitosis. May have a preferential role in regulating neurogenesis. Required for germ cell mitosis and oocyte differentiation. The polypeptide is Protein abnormal spindle (Drosophila melanogaster (Fruit fly)).